We begin with the raw amino-acid sequence, 444 residues long: Na(+)-translocating NADH-quinone reductase subunit A (444 aa).

Belongs to the NqrA family. In terms of assembly, composed of six subunits; NqrA, NqrB, NqrC, NqrD, NqrE and NqrF.

It carries out the reaction a ubiquinone + n Na(+)(in) + NADH + H(+) = a ubiquinol + n Na(+)(out) + NAD(+). NQR complex catalyzes the reduction of ubiquinone-1 to ubiquinol by two successive reactions, coupled with the transport of Na(+) ions from the cytoplasm to the periplasm. NqrA to NqrE are probably involved in the second step, the conversion of ubisemiquinone to ubiquinol. The chain is Na(+)-translocating NADH-quinone reductase subunit A from Shewanella amazonensis (strain ATCC BAA-1098 / SB2B).